Reading from the N-terminus, the 457-residue chain is Phosphomethylpyrimidine synthase (457 aa).

Substrate contacts are provided by residues N81, M110, Y139, H175, 195–197 (SRG), 236–239 (DALR), and E275. Position 279 (H279) interacts with Zn(2+). Residue Y302 coordinates substrate. H343 is a Zn(2+) binding site. C423, C426, and C431 together coordinate [4Fe-4S] cluster.

This sequence belongs to the ThiC family. [4Fe-4S] cluster serves as cofactor.

It catalyses the reaction 5-amino-1-(5-phospho-beta-D-ribosyl)imidazole + S-adenosyl-L-methionine = 4-amino-2-methyl-5-(phosphooxymethyl)pyrimidine + CO + 5'-deoxyadenosine + formate + L-methionine + 3 H(+). It participates in cofactor biosynthesis; thiamine diphosphate biosynthesis. Catalyzes the synthesis of the hydroxymethylpyrimidine phosphate (HMP-P) moiety of thiamine from aminoimidazole ribotide (AIR) in a radical S-adenosyl-L-methionine (SAM)-dependent reaction. The sequence is that of Phosphomethylpyrimidine synthase from Aquifex aeolicus (strain VF5).